The sequence spans 1055 residues: Elongation factor 3 (1055 aa).

Valine 45 lines the ADP pocket. 7 HEAT repeats span residues 45–86, 96–133, 135–172, 175–213, 217–255, 257–290, and 295–337; these read VEFF…NGAA, SAENTPFPALLEAFADKVAAVKTAAIAAVKAIVQSMNP, ASFVLLPALLNLIRTSGKWQIKAGSLEILQQLITSAPY, GEAMPDLVPVLAGAVWDTKSDVKKAAKATLEKAVSLVEN, EKFVPALVKSLLNPIEEVPKTISLLSATTFVSEVTAPTI, LIAPLLIRGLDERPTATKRKVCVIADNMSKLVDS, and RPFL…VPVE. ABC transporter domains lie at 447 to 659 and 687 to 1004; these read CNIE…SYYQ and LKMR…KKAG. ADP is bound by residues asparagine 723, glutamate 933, asparagine 936, and histidine 962. Disordered stretches follow at residues 987 to 1006 and 1024 to 1055; these read HNWVEGQGSGERIDKKAGDD and EKKLSAADKRKAKKDRMARRKRGEEVFSDEEL. A compositionally biased stretch (basic residues) spans 1033 to 1044; that stretch reads RKAKKDRMARRK.

Belongs to the ABC transporter superfamily. ABCF family. EF3 subfamily. In terms of assembly, associates with ribosomes.

It is found in the cytoplasm. It localises to the cytosol. It carries out the reaction ATP + H2O = ADP + phosphate + H(+). It participates in protein biosynthesis; polypeptide chain elongation. In terms of biological role, ribosome-dependent ATPase that functions in cytoplasmic translation elongation. Required for the ATP-dependent release of deacylated tRNA from the ribosomal E-site during protein biosynthesis. Stimulates the eEF1A-dependent binding of aminoacyl-tRNA to the ribosomal A-site, which has reduced affinity for tRNA as long as the E-site is occupied. Assists translation termination by stimulating the release of nascent protein from the ribosome by release factors. Appears to target calcium-channel protein CCH1 to the plasma membrane. In Cryptococcus neoformans var. neoformans serotype D (strain JEC21 / ATCC MYA-565) (Filobasidiella neoformans), this protein is Elongation factor 3.